The primary structure comprises 343 residues: Putative dihydroflavonol 4-reductase (343 aa).

An NADP(+)-binding site is contributed by tyrosine 150.

The protein belongs to the NAD(P)-dependent epimerase/dehydratase family. Dihydroflavonol-4-reductase subfamily.

It catalyses the reaction a (2R,3S,4S)-leucoanthocyanidin + NADP(+) = a (2R,3R)-dihydroflavonol + NADPH + H(+). It functions in the pathway secondary metabolite biosynthesis; flavonoid biosynthesis. The protein is Putative dihydroflavonol 4-reductase (dfrA) of Synechocystis sp. (strain ATCC 27184 / PCC 6803 / Kazusa).